A 404-amino-acid chain; its full sequence is MTGRSRVLAMRHVGGVSPVLVRRDLFLTRTLCSHGPSQPREKRPEEVALGLYHRLTALGAALGHSIRQRASSTAKTWWDRYEEFVGLNEVREAQGNVTEAEKVFMVARGLVREAREDLESQQTKLKEVRDRLDRISRDDNQYLELATLEHRMLQEEKRLRMTYLRAEDSEREKFSLFSAAVRESHEKERTRAERTKNWSLIGSVLGALIGVAGSTYVNRVRLQELKALLLEAQKGPVSLQEAIREQASSYSLQQRDLRDLVADLKGLVQAGTGQGSLSQAGSSPTQDRDTDVLSAALREQLSHSRQVRSRLEGLREQLDGLEKTVSQVAGVVQLAKAAAHPGLESADGALPGSLLEQGSMIMALSDTEQRLEAQVNRNTVYGTLVTCATFVAVLPVLYMLFRAS.

Residues Met1 to Thr30 constitute a mitochondrion transit peptide. Over Leu31–Lys196 the chain is Mitochondrial matrix. Ser65 is modified (phosphoserine). A coiled-coil region spans residues Val111 to Asp138. A helical membrane pass occupies residues Asn197–Val217. At Asn218–Val380 the chain is on the mitochondrial intermembrane side. A helical transmembrane segment spans residues Tyr381–Phe401. Over Arg402–Ser404 the chain is Mitochondrial matrix.

In terms of assembly, the mitochondrial potassium channel (mitoK(ATP)) forms a heteromultimer.

It is found in the mitochondrion inner membrane. It carries out the reaction K(+)(in) = K(+)(out). With respect to regulation, channel activity inhibited by ATP via ABCB8/MITOSUR subunit. Pore-forming subunit of the mitochondrial ATP-gated potassium channel (mitoK(ATP)). Together with ATP-binding subunit ABCB8/MITOSUR of the mitoK(ATP) channel, mediates ATP-dependent K(+) currents across the mitochondrial inner membrane. An increase in ATP intracellular levels closes the channel, inhibiting K(+) transport, whereas a decrease in ATP levels enhances K(+) uptake in the mitochondrial matrix. May contribute to the homeostatic control of cellular metabolism under stress conditions by regulating the mitochondrial matrix volume. The polypeptide is Mitochondrial potassium channel (Bos taurus (Bovine)).